Consider the following 689-residue polypeptide: Glycine--tRNA ligase beta subunit (689 aa).

It belongs to the class-II aminoacyl-tRNA synthetase family. In terms of assembly, tetramer of two alpha and two beta subunits.

It is found in the cytoplasm. The catalysed reaction is tRNA(Gly) + glycine + ATP = glycyl-tRNA(Gly) + AMP + diphosphate. The chain is Glycine--tRNA ligase beta subunit from Klebsiella pneumoniae subsp. pneumoniae (strain ATCC 700721 / MGH 78578).